The primary structure comprises 132 residues: 3-aminoacrylate deaminase RutC (132 aa).

It belongs to the RutC family.

It carries out the reaction (Z)-3-aminoacrylate + H2O + H(+) = 3-oxopropanoate + NH4(+). In terms of biological role, involved in pyrimidine catabolism. Catalyzes the deamination of 3-aminoacrylate to malonic semialdehyde, a reaction that can also occur spontaneously. RutC may facilitate the reaction and modulate the metabolic fitness, rather than catalyzing essential functions. This is 3-aminoacrylate deaminase RutC from Cronobacter sakazakii (strain ATCC BAA-894) (Enterobacter sakazakii).